Here is a 1058-residue protein sequence, read N- to C-terminus: UPF0507 protein YALI0E18612g (1058 aa).

One can recognise a VPS9 domain in the interval 252–394 (TNEDGPLDQA…IGENREQLEA (143 aa)).

Belongs to the UPF0507 family.

The polypeptide is UPF0507 protein YALI0E18612g (Yarrowia lipolytica (strain CLIB 122 / E 150) (Yeast)).